Reading from the N-terminus, the 410-residue chain is MTEAAKKSTKKPVDDGNFDKEIISRWPDLELSQTRFMLNHPEVDSSVKEAKLEKLQETIKEFDMAPFYELVCADFKIVVDATQLAAMKAANQKKIDEITAEVEDAEKNLGESEVRQGLLRKFEYYCQIGDKDNALKAYTATYEKTVGMGYRIDVVFAMIRVGLFFLDHHLINKFITKAKELMEQGGDWERKNRLRSYEALYRMSVRDFAGAADLFLEAVPTFGSYELMTYENLILYTVITTTFALDRPDLRTKVIRCNEVQEQLTGGGLNGTLIPVREYLESYYDCHYDRFFIQLAALESERFKFDRYLSPHFNYYSRGMRHRAYEQFLTPYKTVRIDMMAKDFGVSRAFIDRELHRLIATGQLQCRIDAVNGVIEVNHRDSKNHLYKAVIKDGDILLNRIQKLARVINA.

Positions 207-382 constitute a PCI domain; it reads DFAGAADLFL…GVIEVNHRDS (176 aa).

The protein belongs to the proteasome subunit S10 family. In terms of tissue distribution, expressed in multiple tissues including the intestine, pharynx and hypodermis.

Functionally, acts as a regulatory subunit of the 26S proteasome which is involved in the ATP-dependent degradation of ubiquitinated proteins. This Caenorhabditis elegans protein is 26S proteasome non-ATPase regulatory subunit 6 (rpn-7).